The chain runs to 622 residues: Kelch-like protein 14 (622 aa).

Positions 33–145 constitute a BTB domain; that stretch reads CDVTLTAQGQ…LYTANVTLSL (113 aa). The interval 73–108 is disordered; that stretch reads ALGPGAQDGLGGAPPKEPPPPPQEEPGTPSSSPEDK. The span at 87–96 shows a compositional bias: pro residues; it reads PKEPPPPPQE. 6 Kelch repeats span residues 317-366, 367-418, 419-465, 467-512, 514-564, and 566-614; these read MLLL…EVEN, FLFV…RLDK, NLYV…VHNG, IYIS…VMND, LYAI…VLDD, and IYLV…TVIL.

It is found in the cytoplasm. The protein resides in the cytosol. The protein localises to the endoplasmic reticulum membrane. This chain is Kelch-like protein 14 (KLHL14), found in Gallus gallus (Chicken).